We begin with the raw amino-acid sequence, 379 residues long: EP300-interacting inhibitor of differentiation 3 (379 aa).

Positions 32–58 form a coiled coil; that stretch reads LKQVEEEEEVEALKVEVAAASDTESDT.

It belongs to the NSE4 family. Component of the SMC5-SMC6 complex which consists at least of SMC5, SMC6, NSMCE2, NSMCE1, NSMCE4A or EID3 and NSMCE3. NSMCE1, NSMCE4A or EID3 and NSMCE3 probably form a subcomplex that bridges the head domains of the SMC5:SMC6 heterodimer. Homodimer, and heterodimer with EID2. Interacts with the C-terminal region of CREBBP.

It is found in the nucleus. It localises to the cytoplasm. The protein resides in the chromosome. Its subcellular location is the telomere. Tissue-specific component of the SMC5-SMC6 complex, a complex involved in repair of DNA double-strand breaks by homologous recombination. The complex may promote sister chromatid homologous recombination by recruiting the SMC1-SMC3 cohesin complex to double-strand breaks. The complex is required for telomere maintenance via recombination and mediates sumoylation of shelterin complex (telosome) components. In terms of biological role, acts as a repressor of nuclear receptor-dependent transcription possibly by interfering with CREBBP-dependent coactivation. May function as a coinhibitor of other CREBBP/EP300-dependent transcription factors. This chain is EP300-interacting inhibitor of differentiation 3, found in Bos taurus (Bovine).